Reading from the N-terminus, the 172-residue chain is Arginine repressor (172 aa).

This sequence belongs to the ArgR family.

The protein localises to the cytoplasm. It functions in the pathway amino-acid biosynthesis; L-arginine biosynthesis [regulation]. In terms of biological role, regulates arginine biosynthesis genes. The chain is Arginine repressor from Bifidobacterium adolescentis (strain ATCC 15703 / DSM 20083 / NCTC 11814 / E194a).